The primary structure comprises 354 residues: Malate dehydrogenase 2, peroxisomal (354 aa).

A peroxisomal targeting signal PTS2 region spans residues 10–18; sequence RIARISAHL. Residues 49-55 and Asp-75 each bind NAD(+); that span reads GAAGGIG. Arg-122 and Arg-128 together coordinate substrate. NAD(+)-binding positions include Asn-135 and 158–160; that span reads ISN. The substrate site is built by Asn-160 and Arg-194. His-218 (proton acceptor) is an active-site residue. Met-269 contacts NAD(+).

The protein belongs to the LDH/MDH superfamily. MDH type 1 family. As to quaternary structure, homodimer. In terms of tissue distribution, expressed in rosette leaves.

The protein localises to the peroxisome. It catalyses the reaction (S)-malate + NAD(+) = oxaloacetate + NADH + H(+). Catalyzes a reversible NAD-dependent dehydrogenase reaction involved in central metabolism and redox homeostasis between organelle compartments. Peroxisomal NAD-dependent malate dehydrogenase involved in fatty acid beta-oxidation. Reoxidizes NADH from the beta-oxidation and provides NAD for the conversion of fatty acyl-CoA to acetyl-CoA. Does not participate directly in the glyoxylate cycle. Required for maintenance of photosynthetic rates under photorespiratory conditions, and carbon flow during photorespiration. Supplies NADH reductant to the peroxisomal hydroxypyruvate reductase (HPR), which reduces hydroxypyruvate into glycerate in the photorespiratory cycle. The protein is Malate dehydrogenase 2, peroxisomal of Arabidopsis thaliana (Mouse-ear cress).